The following is a 225-amino-acid chain: Octanoyltransferase (225 aa).

Positions 43 to 225 constitute a BPL/LPL catalytic domain; the sequence is GTAPELVWLL…KTFRDVFGRG (183 aa). Substrate contacts are provided by residues 82–89, 157–159, and 170–172; these read RGGQYTYH, AIG, and GVS. The Acyl-thioester intermediate role is filled by C188.

The protein belongs to the LipB family.

The protein resides in the cytoplasm. It carries out the reaction octanoyl-[ACP] + L-lysyl-[protein] = N(6)-octanoyl-L-lysyl-[protein] + holo-[ACP] + H(+). Its pathway is protein modification; protein lipoylation via endogenous pathway; protein N(6)-(lipoyl)lysine from octanoyl-[acyl-carrier-protein]: step 1/2. Functionally, catalyzes the transfer of endogenously produced octanoic acid from octanoyl-acyl-carrier-protein onto the lipoyl domains of lipoate-dependent enzymes. Lipoyl-ACP can also act as a substrate although octanoyl-ACP is likely to be the physiological substrate. This is Octanoyltransferase from Parvibaculum lavamentivorans (strain DS-1 / DSM 13023 / NCIMB 13966).